The sequence spans 175 residues: SsrA-binding protein (175 aa).

This sequence belongs to the SmpB family.

The protein localises to the cytoplasm. Its function is as follows. Required for rescue of stalled ribosomes mediated by trans-translation. Binds to transfer-messenger RNA (tmRNA), required for stable association of tmRNA with ribosomes. tmRNA and SmpB together mimic tRNA shape, replacing the anticodon stem-loop with SmpB. tmRNA is encoded by the ssrA gene; the 2 termini fold to resemble tRNA(Ala) and it encodes a 'tag peptide', a short internal open reading frame. During trans-translation Ala-aminoacylated tmRNA acts like a tRNA, entering the A-site of stalled ribosomes, displacing the stalled mRNA. The ribosome then switches to translate the ORF on the tmRNA; the nascent peptide is terminated with the 'tag peptide' encoded by the tmRNA and targeted for degradation. The ribosome is freed to recommence translation, which seems to be the essential function of trans-translation. In Prochlorococcus marinus subsp. pastoris (strain CCMP1986 / NIES-2087 / MED4), this protein is SsrA-binding protein.